The chain runs to 476 residues: Light-independent protochlorophyllide reductase subunit N (476 aa).

The [4Fe-4S] cluster site is built by Cys-31, Cys-56, and Cys-116.

This sequence belongs to the BchN/ChlN family. Protochlorophyllide reductase is composed of three subunits; ChlL, ChlN and ChlB. Forms a heterotetramer of two ChlB and two ChlN subunits. The cofactor is [4Fe-4S] cluster.

Its subcellular location is the plastid. The protein resides in the chloroplast. It catalyses the reaction chlorophyllide a + oxidized 2[4Fe-4S]-[ferredoxin] + 2 ADP + 2 phosphate = protochlorophyllide a + reduced 2[4Fe-4S]-[ferredoxin] + 2 ATP + 2 H2O. Its pathway is porphyrin-containing compound metabolism; chlorophyll biosynthesis (light-independent). Component of the dark-operative protochlorophyllide reductase (DPOR) that uses Mg-ATP and reduced ferredoxin to reduce ring D of protochlorophyllide (Pchlide) to form chlorophyllide a (Chlide). This reaction is light-independent. The NB-protein (ChlN-ChlB) is the catalytic component of the complex. In Staurastrum punctulatum (Green alga), this protein is Light-independent protochlorophyllide reductase subunit N.